Consider the following 294-residue polypeptide: Kynurenine formamidase (294 aa).

Residues 1–14 (MSRWKDMNKDELER) show a composition bias toward basic and acidic residues. The interval 1–20 (MSRWKDMNKDELERQFSPSQ) is disordered. The HGGXW signature appears at 84-88 (HGGYW). The Nucleophile role is filled by Ser-153. Catalysis depends on residues Asp-236 and His-269.

This sequence belongs to the kynurenine formamidase family. In terms of assembly, homodimer.

It localises to the cytoplasm. The protein localises to the cytosol. The protein resides in the nucleus. The enzyme catalyses N-formyl-L-kynurenine + H2O = L-kynurenine + formate + H(+). The protein operates within amino-acid degradation; L-tryptophan degradation via kynurenine pathway; L-kynurenine from L-tryptophan: step 2/2. In terms of biological role, catalyzes the hydrolysis of N-formyl-L-kynurenine to L-kynurenine, the second step in the kynurenine pathway of tryptophan degradation. Kynurenine may be further oxidized to nicotinic acid, NAD(H) and NADP(H). Required for elimination of toxic metabolites. This Salmo salar (Atlantic salmon) protein is Kynurenine formamidase (afmid).